The primary structure comprises 333 residues: MLFNIWFGSSLCYLFLLPFSWVYGFFSTLNRISYKYGWRKVYRFSVPIIVIGNLTIGGNGKTPMVLWLIDQLKTRGWRVGVVSRGYGGRSDKYPIIINSTSCSKKCGDEPLLIWRRTGVLVSVSPNRVKAVSALLKKQPLLDIIISDDGLQHYALFRDIEWVVVHSLRRFGNGCWLPAGPMRERITRLNTVQAIIINGLSNDIQSGAILMQLCPRSIINLVTGEIRPIQPLKDVVAIAGIGYPKQFFMTLQDYGIFPIKTIEFSDHHMYSEIMLSSLTSGNEMLLMTEKDAIKCLDFAHENWWYVHIDVNIHQEDTKKLLSKIESTIQYYKNN.

55–62 is a binding site for ATP; sequence TIGGNGKT.

It belongs to the LpxK family.

It carries out the reaction a lipid A disaccharide + ATP = a lipid IVA + ADP + H(+). It participates in glycolipid biosynthesis; lipid IV(A) biosynthesis; lipid IV(A) from (3R)-3-hydroxytetradecanoyl-[acyl-carrier-protein] and UDP-N-acetyl-alpha-D-glucosamine: step 6/6. In terms of biological role, transfers the gamma-phosphate of ATP to the 4'-position of a tetraacyldisaccharide 1-phosphate intermediate (termed DS-1-P) to form tetraacyldisaccharide 1,4'-bis-phosphate (lipid IVA). The chain is Tetraacyldisaccharide 4'-kinase from Blochmanniella floridana.